The sequence spans 102 residues: Putative sortase YwpE (102 aa).

The Proton donor/acceptor role is filled by H17. C78 functions as the Acyl-thioester intermediate in the catalytic mechanism.

It belongs to the bacterial sortase family.

Its function is as follows. Seems not to play a major role if any as a sortase. This is Putative sortase YwpE (ywpE) from Bacillus subtilis (strain 168).